A 315-amino-acid chain; its full sequence is Small ribosomal subunit biogenesis GTPase RsgA (315 aa).

Residues 80 to 241 enclose the CP-type G domain; it reads LSKQTHIIAS…IIDTPGIKGF (162 aa). Residues 129-132 and 183-191 contribute to the GTP site; these read NKVD and GHSGTGKST. The Zn(2+) site is built by C265, C270, H272, and C278.

It belongs to the TRAFAC class YlqF/YawG GTPase family. RsgA subfamily. Monomer. Associates with 30S ribosomal subunit, binds 16S rRNA. The cofactor is Zn(2+).

The protein resides in the cytoplasm. One of several proteins that assist in the late maturation steps of the functional core of the 30S ribosomal subunit. Helps release RbfA from mature subunits. May play a role in the assembly of ribosomal proteins into the subunit. Circularly permuted GTPase that catalyzes slow GTP hydrolysis, GTPase activity is stimulated by the 30S ribosomal subunit. In Christiangramia forsetii (strain DSM 17595 / CGMCC 1.15422 / KT0803) (Gramella forsetii), this protein is Small ribosomal subunit biogenesis GTPase RsgA.